Consider the following 284-residue polypeptide: Tropomyosin alpha-1 chain (284 aa).

Residues 1-40 (MDAIKKKMQMLKLDKENALDRAEQAEADKKGAEDKSKQLE) are disordered. A coiled-coil region spans residues 1–284 (MDAIKKKMQM…DHALNDMTSI (284 aa)). The segment covering 12-40 (KLDKENALDRAEQAEADKKGAEDKSKQLE) has biased composition (basic and acidic residues).

The protein belongs to the tropomyosin family. As to quaternary structure, homodimer. Heterodimer of an alpha (TPM1, TPM3 or TPM4) and a beta (TPM2) chain.

The protein localises to the cytoplasm. Its subcellular location is the cytoskeleton. Its function is as follows. Binds to actin filaments in muscle and non-muscle cells. Plays a central role, in association with the troponin complex, in the calcium dependent regulation of vertebrate striated muscle contraction. Smooth muscle contraction is regulated by interaction with caldesmon. In non-muscle cells is implicated in stabilizing cytoskeleton actin filaments. This Rana temporaria (European common frog) protein is Tropomyosin alpha-1 chain (tpm1).